The chain runs to 396 residues: Argininosuccinate synthase (396 aa).

ATP-binding positions include 10-18 (AYSGGLDTS) and alanine 37. Tyrosine 88 and serine 93 together coordinate L-citrulline. Position 118 (glycine 118) interacts with ATP. L-aspartate is bound by residues threonine 120, asparagine 124, and aspartate 125. Asparagine 124 lines the L-citrulline pocket. L-citrulline is bound by residues arginine 128, serine 176, serine 185, glutamate 261, and tyrosine 273.

Belongs to the argininosuccinate synthase family. Type 1 subfamily. As to quaternary structure, homotetramer.

It is found in the cytoplasm. It catalyses the reaction L-citrulline + L-aspartate + ATP = 2-(N(omega)-L-arginino)succinate + AMP + diphosphate + H(+). Its pathway is amino-acid biosynthesis; L-arginine biosynthesis; L-arginine from L-ornithine and carbamoyl phosphate: step 2/3. This Nitratidesulfovibrio vulgaris (strain DP4) (Desulfovibrio vulgaris) protein is Argininosuccinate synthase.